We begin with the raw amino-acid sequence, 237 residues long: Probable glutathione-independent glyoxalase SNO4 (237 aa).

Catalysis depends on residues Cys138, His139, and Glu170.

This sequence belongs to the peptidase C56 family. HSP31-like subfamily. In terms of assembly, homodimer.

It is found in the cytoplasm. The protein resides in the P-body. The catalysed reaction is methylglyoxal + H2O = (R)-lactate + H(+). Functionally, catalyzes the conversion of methylglyoxal (MG) to D-lactate in a single glutathione (GSH)-independent step. May play a role in detoxifying endogenously produced glyoxals. Involved in protection against reactive oxygen species (ROS). Important for viability in stationary phase. May negatively regulate TORC1 in response to nutrient limitation. The chain is Probable glutathione-independent glyoxalase SNO4 from Saccharomyces cerevisiae (strain ATCC 204508 / S288c) (Baker's yeast).